The following is a 571-amino-acid chain: Proline--tRNA ligase (571 aa).

Belongs to the class-II aminoacyl-tRNA synthetase family. ProS type 1 subfamily. Homodimer.

It localises to the cytoplasm. It carries out the reaction tRNA(Pro) + L-proline + ATP = L-prolyl-tRNA(Pro) + AMP + diphosphate. Functionally, catalyzes the attachment of proline to tRNA(Pro) in a two-step reaction: proline is first activated by ATP to form Pro-AMP and then transferred to the acceptor end of tRNA(Pro). As ProRS can inadvertently accommodate and process non-cognate amino acids such as alanine and cysteine, to avoid such errors it has two additional distinct editing activities against alanine. One activity is designated as 'pretransfer' editing and involves the tRNA(Pro)-independent hydrolysis of activated Ala-AMP. The other activity is designated 'posttransfer' editing and involves deacylation of mischarged Ala-tRNA(Pro). The misacylated Cys-tRNA(Pro) is not edited by ProRS. The chain is Proline--tRNA ligase from Pseudomonas putida (strain ATCC 700007 / DSM 6899 / JCM 31910 / BCRC 17059 / LMG 24140 / F1).